The primary structure comprises 365 residues: Inositol 4-methyltransferase (365 aa).

Aspartate 232 is a binding site for S-adenosyl-L-methionine. Residue histidine 270 is the Proton acceptor of the active site.

The protein belongs to the class I-like SAM-binding methyltransferase superfamily. Cation-independent O-methyltransferase family. As to expression, leaves and roots. The levels found in the leaves are 25 times greater than in the roots.

The catalysed reaction is myo-inositol + S-adenosyl-L-methionine = 1D-4-O-methyl-myo-inositol + S-adenosyl-L-homocysteine + H(+). The protein operates within polyol metabolism; myo-inositol metabolism. Its function is as follows. Catalyzes the methylation of myo-inositol into ononitol (1D-4-O-methyl myo-inositol), the first step in the biosynthesis of the cyclic sugar pinitol which has osmoprotective properties. This Mesembryanthemum crystallinum (Common ice plant) protein is Inositol 4-methyltransferase (IMT1).